The following is a 38-amino-acid chain: Photosystem II reaction center protein L (38 aa).

The helical transmembrane segment at 17–37 threads the bilayer; it reads SLYWGLLLIFVLAVLFSSYIF.

Belongs to the PsbL family. In terms of assembly, PSII is composed of 1 copy each of membrane proteins PsbA, PsbB, PsbC, PsbD, PsbE, PsbF, PsbH, PsbI, PsbJ, PsbK, PsbL, PsbM, PsbT, PsbX, PsbY, PsbZ, Psb30/Ycf12, at least 3 peripheral proteins of the oxygen-evolving complex and a large number of cofactors. It forms dimeric complexes.

It localises to the plastid. It is found in the chloroplast thylakoid membrane. Functionally, one of the components of the core complex of photosystem II (PSII). PSII is a light-driven water:plastoquinone oxidoreductase that uses light energy to abstract electrons from H(2)O, generating O(2) and a proton gradient subsequently used for ATP formation. It consists of a core antenna complex that captures photons, and an electron transfer chain that converts photonic excitation into a charge separation. This subunit is found at the monomer-monomer interface and is required for correct PSII assembly and/or dimerization. The polypeptide is Photosystem II reaction center protein L (Ostreococcus tauri).